The primary structure comprises 417 residues: UDP-N-acetylglucosamine 1-carboxyvinyltransferase (417 aa).

22–23 provides a ligand contact to phosphoenolpyruvate; the sequence is KN. A UDP-N-acetyl-alpha-D-glucosamine-binding site is contributed by Arg92. Cys116 acts as the Proton donor in catalysis. Residue Cys116 is modified to 2-(S-cysteinyl)pyruvic acid O-phosphothioketal. UDP-N-acetyl-alpha-D-glucosamine-binding residues include Asp304 and Ile326.

It belongs to the EPSP synthase family. MurA subfamily.

It is found in the cytoplasm. The enzyme catalyses phosphoenolpyruvate + UDP-N-acetyl-alpha-D-glucosamine = UDP-N-acetyl-3-O-(1-carboxyvinyl)-alpha-D-glucosamine + phosphate. It functions in the pathway cell wall biogenesis; peptidoglycan biosynthesis. Its function is as follows. Cell wall formation. Adds enolpyruvyl to UDP-N-acetylglucosamine. The protein is UDP-N-acetylglucosamine 1-carboxyvinyltransferase of Desulfosudis oleivorans (strain DSM 6200 / JCM 39069 / Hxd3) (Desulfococcus oleovorans).